The primary structure comprises 388 residues: S-adenosylmethionine synthase (388 aa).

His16 provides a ligand contact to ATP. Asp18 contributes to the Mg(2+) binding site. Glu44 serves as a coordination point for K(+). Positions 57 and 100 each coordinate L-methionine. The tract at residues 100–110 (QSPEIAQGVDR) is flexible loop. ATP contacts are provided by residues 165–167 (DAK), Asp240, 246–247 (RK), Ala263, and Lys267. Asp240 is a binding site for L-methionine. L-methionine is bound at residue Lys271.

The protein belongs to the AdoMet synthase family. In terms of assembly, homotetramer; dimer of dimers. Mg(2+) is required as a cofactor. Requires K(+) as cofactor.

It is found in the cytoplasm. The catalysed reaction is L-methionine + ATP + H2O = S-adenosyl-L-methionine + phosphate + diphosphate. Its pathway is amino-acid biosynthesis; S-adenosyl-L-methionine biosynthesis; S-adenosyl-L-methionine from L-methionine: step 1/1. Functionally, catalyzes the formation of S-adenosylmethionine (AdoMet) from methionine and ATP. The overall synthetic reaction is composed of two sequential steps, AdoMet formation and the subsequent tripolyphosphate hydrolysis which occurs prior to release of AdoMet from the enzyme. This chain is S-adenosylmethionine synthase, found in Acinetobacter baumannii (strain ACICU).